A 263-amino-acid polypeptide reads, in one-letter code: Linear gramicidin dehydrogenase LgrE (263 aa).

Ser-96 is an active-site residue.

It belongs to the thioesterase family.

Its function is as follows. In the final step of gramicidin biosynthesis, reduces the pentadecapeptide-aldehyde intermediate, that is released from the terminal module of the non-ribosomal peptide synthetase LgrD, to the final product ethanolamine-containing gramicidin. The chain is Linear gramicidin dehydrogenase LgrE (lgrE) from Brevibacillus parabrevis.